We begin with the raw amino-acid sequence, 424 residues long: Myb family transcription factor RLI1 (424 aa).

The segment at 144 to 165 (RPQKRDSGERTPLPPPSQQQHQ) is disordered. In terms of domain architecture, HTH myb-type spans 238–298 (APSKTRIRWT…HLQKYRIAKY (61 aa)). A DNA-binding region (H-T-H motif) is located at residues 269–294 (PKGILKLMNSDGLTIYHIKSHLQKYR). Positions 326 to 391 (MQITEALRVQ…ELDDVVAFAA (66 aa)) form a coiled coil. An LHEQLE motif is present at residues 342–347 (LHEQLE).

This sequence belongs to the MYB-CC family. As to quaternary structure, interacts with SPX1 and SPX2 in the nucleus; these interactions prevent binding to the promoters of target genes, thus regulating negatively leaf inclination in response to phosphate (Pi) starvation. In terms of assembly, homodimer. Interacts with PHR2 in the nucleus. As to expression, mostly expressed in roots and leaves blades and, to a lower extent, in leaves sheaths, culms and panicles. Localized in leaves lamina joints. Expressed equally in shoots and roots. In terms of tissue distribution, mostly expressed in shoots and, to a lower extent, in roots.

It is found in the nucleus. Transcription factor binding to specific DNA sequences of target genes promoters, such as the motif R1BS 5'-NAKATNCN-3' and the motif P1BS 5'-GNATATNC-3' to trigger their expression. Nitrate-induced component involved in modulating phosphate (Pi) response and homeostasis together with PHR2; activates directly the expression of Pi starvation-induced (PSI) genes upon nitrate disponibility, thus triggering the nitrate-induced phosphate response (NIPR) promoting Pi uptake activity. Functionally, binds preferentially to the P1BS motif 5'-GNATATNC-3' in target genes promoters. Its function is as follows. Binds preferentially to the R1BS motif 5'-NAKATNCN-3' in target genes promoters, including several genes involved in the plant hormone signal transduction pathway. Involved in the shoot architecture; positively regulates leaf inclination by affecting lamina joint cell elongation via the direct promotion of ILI4/BU1 and BC1 genes expression, especially in response to phosphate (Pi) availability. Regulates both brassinolide (BL) biosynthesis and signaling by directly activating BL-biosynthesis and signaling genes. The protein is Myb family transcription factor RLI1 of Oryza sativa subsp. japonica (Rice).